A 43-amino-acid chain; its full sequence is Iota-conotoxin-like Fi11.6 (43 aa).

Intrachain disulfides connect Cys2/Cys16, Cys9/Cys19, Cys15/Cys24, and Cys18/Cys35. Pro8 is modified (4-hydroxyproline). Position 26 is a 4-hydroxyproline (Pro26). The residue at position 30 (Trp30) is a 6'-bromotryptophan. The residue at position 41 (Phe41) is a D-phenylalanine.

It belongs to the conotoxin I1 superfamily. In terms of tissue distribution, expressed by the venom duct.

It is found in the secreted. Functionally, iota-conotoxins bind to voltage-gated sodium channels (Nav) and act as agonists by shifting the voltage-dependence of activation to more hyperpolarized levels. Produces general excitatory symptoms. This chain is Iota-conotoxin-like Fi11.6, found in Conus figulinus (Fig cone).